We begin with the raw amino-acid sequence, 300 residues long: MGASLNEIKTRIASTKKTSQITRAMQMVSASKLTKSEASSQKFQIYANKVREIVTHLTATQLNDIASDNPRGDINYNSMLISRPVKKTGYIVITADGGLVGGYNSSILKQTMSILEEDHKSPDDYVMIAIGGTGADFFKARGINLAYELRNLSDQPSFDEVRKIVGMATTMYQNEVFDELYVCYNHHINSLTSQFRVEKMLPISDLDPEEATTFDQEYIFEPSKEEILAQLLPQYAESLIYGAIVDAKTAEHAAGMTAMKTATDNAATIIDDLTVSYNRARQGAITQEITEIVAGASALE.

It belongs to the ATPase gamma chain family. F-type ATPases have 2 components, CF(1) - the catalytic core - and CF(0) - the membrane proton channel. CF(1) has five subunits: alpha(3), beta(3), gamma(1), delta(1), epsilon(1). CF(0) has three main subunits: a, b and c.

Its subcellular location is the cell membrane. Produces ATP from ADP in the presence of a proton gradient across the membrane. The gamma chain is believed to be important in regulating ATPase activity and the flow of protons through the CF(0) complex. This Enterococcus hirae (strain ATCC 9790 / DSM 20160 / JCM 8729 / LMG 6399 / NBRC 3181 / NCIMB 6459 / NCDO 1258 / NCTC 12367 / WDCM 00089 / R) protein is ATP synthase gamma chain.